We begin with the raw amino-acid sequence, 151 residues long: Large ribosomal subunit protein uL15 (151 aa).

A disordered region spans residues Gly37–Gln57.

The protein belongs to the universal ribosomal protein uL15 family. In terms of assembly, part of the 50S ribosomal subunit.

Binds to the 23S rRNA. The chain is Large ribosomal subunit protein uL15 from Prochlorococcus marinus (strain MIT 9313).